A 264-amino-acid chain; its full sequence is ECF RNA polymerase sigma factor BldN (264 aa).

The tract at residues 1–87 (MYPHVGVDAS…PAADSDSARM (87 aa)) is not required for transcription in vitro. Positions 64-83 (RSSSSGAAATTHRRPAADSD) are disordered. Residues 105-172 (LYDQYSDTVY…LVADHFKSSR (68 aa)) are sigma-70 factor domain-2. Residues 129-132 (DLTS) carry the Polymerase core binding motif. The segment at 204 to 255 (ALLDAVRRLNPQQQECVTLRFLQGLSVAETARVMGKNEGAIKTLQYRAVRTL) is sigma-70 factor domain-4.

Belongs to the sigma-70 factor family. ECF subfamily. Two forms of protein exist; a 35 kDa form in early growth and a 28 kDa form seen in later stages (at protein level). In liquid culture the larger form accumulates to higher level than on solid media. The shorter form results from processing just upstream of Met-87; the exact position is unknown. There are 4 possible start codons; mutation of the first prevents protein production while mutation of the other 3 (Val-44, Met-87 and Met-88) permits production of both forms. Introduction of stop codons between the first and second, or second and third possible start codons also prevents protein production, corroborating that the annotated start codon is the correct one.

Functionally, sigma factors are initiation factors that promote the attachment of RNA polymerase to specific initiation sites and are then released. Extracytoplasmic function (ECF) sigma factors are usually held in an inactive form by an anti-sigma factor until released. ECF sigma factor involved in aerial mycelium formation, required for translation from the bldMp1 promoter. Expressed as a preprotein; processing and accumulation of the mature protein starts as aerial mycelium formation and sporulation commence. Activates expression of about 17 genes, including those for rdlA and most of the chaplins (chpA to chpH); chaplin activation is indirect. The chain is ECF RNA polymerase sigma factor BldN from Streptomyces coelicolor (strain ATCC BAA-471 / A3(2) / M145).